Consider the following 621-residue polypeptide: ATP-dependent DNA helicase Q1 (621 aa).

A Helicase ATP-binding domain is found at 100–275; sequence VNATMARKDI…QKILCVEKCL (176 aa). 113–120 contacts ATP; that stretch reads MPTGGGKS. Residues 219 to 222 carry the DEVH box motif; that stretch reads DEVH. Residues 296–451 enclose the Helicase C-terminal domain; it reads SAEDFIENIA…EMVSYCQNIS (156 aa). Residues Cys-453, Cys-471, Cys-475, and Cys-478 each coordinate Zn(2+). Lys-514 and Lys-522 each carry N6-acetyllysine. Phosphoserine occurs at positions 597 and 602.

Belongs to the helicase family. RecQ subfamily. In terms of assembly, may form homodimers or higher order oligomers. Interacts with EXO1. Interacts with MLH1. Interacts with PARP1. Mg(2+) is required as a cofactor. Mn(2+) serves as cofactor. Requires Zn(2+) as cofactor.

Its subcellular location is the nucleus. The enzyme catalyses Couples ATP hydrolysis with the unwinding of duplex DNA by translocating in the 3'-5' direction.. It catalyses the reaction ATP + H2O = ADP + phosphate + H(+). The catalysed reaction is dATP + H2O = dADP + phosphate + H(+). Functionally, DNA helicase that plays a role in DNA damage repair and genome stability. Exhibits a magnesium- and ATP-dependent DNA-helicase activity that unwinds single- and double-stranded DNA in a 3'-5' direction. Plays a role in restoring regressed replication forks. Required to restart stalled replication forks induced by abortive topoisomerase 1 and 2 lesions. May play a role in the repair of DNA that is damaged by ultraviolet light or other mutagens. The sequence is that of ATP-dependent DNA helicase Q1 (Recql) from Rattus norvegicus (Rat).